The primary structure comprises 28 residues: uncharacterized protein (28 aa).

The chain crosses the membrane as a helical span at residues Ser5 to Leu27.

The protein localises to the membrane. This is an uncharacterized protein from Saccharomyces cerevisiae (strain ATCC 204508 / S288c) (Baker's yeast).